The sequence spans 124 residues: Seripauperin-19 (124 aa).

An N-terminal signal peptide occupies residues 1–20; sequence MVKLTSIAAGVAAIAAGVAA.

Belongs to the SRP1/TIP1 family. Seripauperin subfamily.

In Saccharomyces cerevisiae (strain ATCC 204508 / S288c) (Baker's yeast), this protein is Seripauperin-19 (PAU19).